The chain runs to 595 residues: Protein alan shepard (595 aa).

Residues 1–12 (MHPRYSPAPPPH) are compositionally biased toward pro residues. Residues 1–82 (MHPRYSPAPP…ASVAAAPPTP (82 aa)) are disordered. Phosphotyrosine is present on Y5. Over residues 13–31 (QQQQQQQQQPMGGPHQQQS) the composition is skewed to low complexity. A compositionally biased stretch (gly residues) spans 32-43 (AGGGPGHGGGAS). Over residues 50 to 68 (PNSQQLPPQMPRSQNYANG) the composition is skewed to polar residues. Low complexity predominate over residues 69–78 (SSSAASVAAA). Phosphotyrosine occurs at positions 138 and 154. The disordered stretch occupies residues 184-238 (RVPTAASPSNTNSSSSSNTGSQSGTLSTSLSNTTNTNTTMGPNGTAQNQNQQGGE). The span at 190–238 (SPSNTNSSSSSNTGSQSGTLSTSLSNTTNTNTTMGPNGTAQNQNQQGGE) shows a compositional bias: low complexity. RRM domains follow at residues 243–316 (TNLY…MAKQ) and 322–401 (TNLY…FADG). The segment at 569–595 (MTDSEQASTAASPDEAYTQYPHQAAPK) is disordered.

Functionally, has a role in the perception of gravity. This Drosophila virilis (Fruit fly) protein is Protein alan shepard.